A 152-amino-acid polypeptide reads, in one-letter code: 3-hydroxyacyl-[acyl-carrier-protein] dehydratase FabZ (152 aa).

The active site involves H58.

This sequence belongs to the thioester dehydratase family. FabZ subfamily.

The protein localises to the cytoplasm. The catalysed reaction is a (3R)-hydroxyacyl-[ACP] = a (2E)-enoyl-[ACP] + H2O. Involved in unsaturated fatty acids biosynthesis. Catalyzes the dehydration of short chain beta-hydroxyacyl-ACPs and long chain saturated and unsaturated beta-hydroxyacyl-ACPs. The protein is 3-hydroxyacyl-[acyl-carrier-protein] dehydratase FabZ of Prochlorococcus marinus (strain MIT 9215).